Consider the following 689-residue polypeptide: Putative pentatricopeptide repeat-containing protein At3g15130 (689 aa).

PPR repeat units follow at residues 5-39 (QRQN…GSGL), 40-70 (NLIT…MPER), 71-105 (NVVS…GIYP), 106-140 (NEFT…GFEM), 141-171 (MVEV…IVDR), 172-206 (SLIS…NIKE), 209-243 (DEFT…GFHC), 246-276 (SATI…IKEK), 277-311 (TMIS…NSQI), 312-342 (DSFA…AVKL), 347-377 (ETSV…MQLK), 378-412 (DVIS…NIEP), 413-448 (DEVC…GIKP), and 449-479 (RVEH…MPIK). A type E motif region spans residues 484–559 (IWQTLLSLCR…EAGMSWVEIE (76 aa)). The type E(+) motif stretch occupies residues 560 to 590 (REVHFFRSGEDSHPLTPVIQETLKEAERRLR). A type DYW motif region spans residues 592–689 (ELGYVYGLKH…DGCCSCGDYW (98 aa)).

The protein belongs to the PPR family. PCMP-H subfamily.

The sequence is that of Putative pentatricopeptide repeat-containing protein At3g15130 (PCMP-H86) from Arabidopsis thaliana (Mouse-ear cress).